Consider the following 347-residue polypeptide: Beta carbonic anhydrase 1, chloroplastic (347 aa).

Residues 1 to 113 constitute a chloroplast transit peptide; the sequence is MSTAPLSGFF…AAAKVEQITA (113 aa). Position 114 is an N-acetylalanine (alanine 114). Position 175 is a phosphoserine (serine 175). Tyrosine 203 is subject to Phosphotyrosine. At serine 266 the chain carries Phosphoserine. Cysteine 280 is subject to S-nitrosocysteine.

Belongs to the beta-class carbonic anhydrase family. In terms of assembly, homohexamer. Post-translationally, S-nitrosylation at Cys-280 is up-regulated during nitrosative burst and suppresses both binding of salicylic acid and carbonic anhydrase activity. S-nitrosylated in response to an avirulent but not to a virulent bacterial strain. As to expression, strongly expressed in aerial tissues including leaves, stems, flowers and siliques. Accumulates in both guard cells and mesophyll cells.

Its subcellular location is the plastid. The protein resides in the chloroplast stroma. It is found in the cell membrane. It carries out the reaction hydrogencarbonate + H(+) = CO2 + H2O. In terms of biological role, reversible hydration of carbon dioxide. Required for photosynthesis in cotyledons. Binds salicylic acid. Together with BCA4, involved in the CO(2) signaling pathway which controls gas-exchange between plants and the atmosphere by modulating stomatal development and movements. Promotes water use efficiency. The sequence is that of Beta carbonic anhydrase 1, chloroplastic from Arabidopsis thaliana (Mouse-ear cress).